We begin with the raw amino-acid sequence, 112 residues long: Protein BEX3 (112 aa).

The interval 1-45 (MANIHQENEEMEQPVQNGEEDRPLGGGEGHQPERNHRRGQARRLA) is disordered. An interaction with p75NTR/NGFR region spans residues 69–94 (EIFMEEMREIRRKLRELQLRNCLRIL). Residues 69–112 (EIFMEEMREIRRKLRELQLRNCLRILMGELSNHHDHHDEFCLMP) form an interaction with 14-3-3 epsilon region. A Nuclear export signal motif is present at residues 78–88 (IRRKLRELQLR). Residues 101 to 105 (HHDHH) are his cluster. Cys-109 is a binding site for Zn(2+).

Belongs to the BEX family. As to quaternary structure, self-associates. Binds to the DEATH domain of p75NTR/NGFR. Interacts with 14-3-3 epsilon (YWHAE). Interacts with DIABLO/SMAC. In terms of processing, ubiquitinated. Degraded by the proteasome.

Its subcellular location is the nucleus. It localises to the cytoplasm. The protein localises to the cytosol. In terms of biological role, may be a signaling adapter molecule involved in NGFR/p75NTR-mediated apoptosis induced by NGF. Plays a role in zinc-triggered neuronal death. In absence of reductive stress, acts as a pseudosubstrate for the CRL2(FEM1B) complex: associates with FEM1B via zinc, thereby preventing association between FEM1B and its substrates. The sequence is that of Protein BEX3 from Bos taurus (Bovine).